We begin with the raw amino-acid sequence, 415 residues long: Esterase FrsA (415 aa).

It belongs to the FrsA family.

It carries out the reaction a carboxylic ester + H2O = an alcohol + a carboxylate + H(+). In terms of biological role, catalyzes the hydrolysis of esters. The polypeptide is Esterase FrsA (Serratia proteamaculans (strain 568)).